The primary structure comprises 963 residues: MPLNLPLSALEQHDEFIGRHIGPCSTEMATMLTAIGADSLEQLIDQTVPAAIRLPADLPLPAPRREHEALADLKAMASKNVVNKSCIGMGYYDTLTPKVILRNVMENPGWYTAYTPYQAEIAQGRLEALMNFQQMVIDLTGLEIANASLLDEATAAAEAMTMARRVSKSKSNRFLVDANCFPQSIDVVKTRAAYFGFELVIGNIDAHKDGDFFGALLQYPGDNGEVRDLTDVIAGLKAKGTTVAVASDLMALVLLKSPGAMGADIALGSSQRFGIPMGFGGPHAAFFATREAFVRSMPGRIIGISKDARGNTAYRMALQTREQHIRREKANSNICTSQVLLANMAGMYVVYHGAEGLRTIAGRIHRLTAILAEGLKRASVNLLTKQFYDTVHFDLGARAESVYNDALAAGYNLRRVSAGVLGISFDETTTRDDVATLFKLIAQTTLDVATIDAQVAAADSALPDSLIRSDAVLQHPVFNTHHTEHEMLRYLKSLQNKDLALDHSMISLGSCTMKLNATSEMIPVTWPEFGGIHPFAPRDQAVGYLEMITSLTEWLKTVTGFDAICMQPNSGAQGEYAGLVAIDRFHASRGEEHRNVCLIPKSAHGTNPATAQMANMKVVVVDCDENGNVDVADLKAKAEEHKDDLACLMITYPSTHGVFEEAIRDICAIVHANGGQVYMDGANLNAQVGLTSPGFIGADVSHMNLHKTFAIPHGGGGPGMGPIGLKAHLAPFMADHVVQPTGDANRVNAGQGAVSAAPFGSASILTISWMYLAMLGGAGVKKATQVAILNANYVAKQLNAHYPVLYVGKNGRVAHECILDIRPIKAATGIAEIDIAKRLMDYGFHAPTVSFPVAGTIMVEPTESESKAELDRFIGAMIAIREEIRQIENGVWTADNNPLKNAPHSQADVMDAEWKHPYSRQQAVFPLPWVAANKFWPSVNRIDDVYGDRNLNCACPPMEAYAD.

K707 bears the N6-(pyridoxal phosphate)lysine mark.

It belongs to the GcvP family. In terms of assembly, the glycine cleavage system is composed of four proteins: P, T, L and H. Pyridoxal 5'-phosphate serves as cofactor.

The catalysed reaction is N(6)-[(R)-lipoyl]-L-lysyl-[glycine-cleavage complex H protein] + glycine + H(+) = N(6)-[(R)-S(8)-aminomethyldihydrolipoyl]-L-lysyl-[glycine-cleavage complex H protein] + CO2. Its function is as follows. The glycine cleavage system catalyzes the degradation of glycine. The P protein binds the alpha-amino group of glycine through its pyridoxal phosphate cofactor; CO(2) is released and the remaining methylamine moiety is then transferred to the lipoamide cofactor of the H protein. In Dechloromonas aromatica (strain RCB), this protein is Glycine dehydrogenase (decarboxylating).